The chain runs to 242 residues: MGQKIHPLGFRLGVIKDHKSCWYADAKRYPELLQEDRRIRQYVEKNLANAGIADIRIERKADQVDISIHTARPGVVVGRGGTGIEQLRLGLQKALGGQRQIRINVIEVARVDADANLIAEYIAQQLERRVSFRRVVRQAIQRAQRAEVKGIKIQVSGRLNGAEIARTEWVREGRVPLHTLRADIDYSYKTASTIYGILGVKVWIFKGEIIPGQEEIAAAVPAQAPRRQQRRRQQFEDRSSEG.

The region spanning 39–109 (IRQYVEKNLA…QIRINVIEVA (71 aa)) is the KH type-2 domain. Residues 220–242 (VPAQAPRRQQRRRQQFEDRSSEG) are disordered. Basic and acidic residues predominate over residues 233–242 (QQFEDRSSEG).

The protein belongs to the universal ribosomal protein uS3 family. In terms of assembly, part of the 30S ribosomal subunit. Forms a tight complex with proteins S10 and S14.

Binds the lower part of the 30S subunit head. Binds mRNA in the 70S ribosome, positioning it for translation. The protein is Small ribosomal subunit protein uS3 of Microcystis aeruginosa (strain NIES-843 / IAM M-2473).